The primary structure comprises 187 residues: Accessory gene regulator protein B (187 aa).

A run of 5 helical transmembrane segments spans residues 49 to 69 (ISIF…YMLI), 82 to 102 (ILCY…LINI), 106 to 126 (FTYL…YAPA), 144 to 164 (VSII…PFYA), and 166 to 186 (FMLL…FPKE).

Belongs to the AgrB family.

Its subcellular location is the cell membrane. Essential for the production of a quorum sensing system signal molecule, the autoinducing peptide (AIP). This quorum sensing system is responsible for the regulation of the expression of virulence factor genes. Involved in the proteolytic processing of AgrD, the precursor of AIP. In Staphylococcus aureus (strain bovine RF122 / ET3-1), this protein is Accessory gene regulator protein B.